A 249-amino-acid chain; its full sequence is Triosephosphate isomerase (249 aa).

9-11 (NWK) serves as a coordination point for substrate. The active-site Electrophile is His-95. Glu-166 acts as the Proton acceptor in catalysis. Substrate is bound by residues Gly-172, Ser-211, and 232–233 (GG).

The protein belongs to the triosephosphate isomerase family. Homodimer.

It is found in the cytoplasm. It carries out the reaction D-glyceraldehyde 3-phosphate = dihydroxyacetone phosphate. It participates in carbohydrate biosynthesis; gluconeogenesis. The protein operates within carbohydrate degradation; glycolysis; D-glyceraldehyde 3-phosphate from glycerone phosphate: step 1/1. Its function is as follows. Involved in the gluconeogenesis. Catalyzes stereospecifically the conversion of dihydroxyacetone phosphate (DHAP) to D-glyceraldehyde-3-phosphate (G3P). The protein is Triosephosphate isomerase of Legionella pneumophila subsp. pneumophila (strain Philadelphia 1 / ATCC 33152 / DSM 7513).